A 140-amino-acid polypeptide reads, in one-letter code: Tumor protein D55 (140 aa).

The segment at 1–28 (MPHARTETSVGTYESHSTSELEDLTEPE) is disordered. Residues 7-18 (ETSVGTYESHST) are compositionally biased toward polar residues. The stretch at 28–57 (EQRELKTKLTKLEAEIVTLRHVLAAKERRC) forms a coiled coil.

The protein belongs to the TPD52 family. In terms of assembly, interacts with TPD52L2. In terms of tissue distribution, specifically expressed in testis. Expressed at 5.6-fold higher levels in adult testis than in fetal testis.

The protein is Tumor protein D55 (TPD52L3) of Homo sapiens (Human).